The following is a 316-amino-acid chain: Elongation factor Ts, mitochondrial (316 aa).

A mitochondrion-targeting transit peptide spans 1 to 18; it reads MFARAPFVRLLSTTSRNL. Residues 245–269 form a disordered region; that stretch reads EAAESVKTQEGLRSQEGHDPNADPV.

It belongs to the EF-Ts family.

It is found in the mitochondrion. In terms of biological role, associates with the EF-Tu.GDP complex and induces the exchange of GDP to GTP. It remains bound to the aminoacyl-tRNA.EF-Tu.GTP complex up to the GTP hydrolysis stage on the ribosome. The sequence is that of Elongation factor Ts, mitochondrial from Caenorhabditis elegans.